Here is a 98-residue protein sequence, read N- to C-terminus: MYNMVSLFIVAVLLLTYANVEGSDVTGGFPVNSNNCIYPCYSTQDEIQCEEFCEKLNGRLGYCRRDACYCEHLPESVKQITNSKTFDCSNGPWDLSTV.

The N-terminal stretch at 1-22 (MYNMVSLFIVAVLLLTYANVEG) is a signal peptide. 4 disulfides stabilise this stretch: Cys-36–Cys-88, Cys-40–Cys-63, Cys-49–Cys-68, and Cys-53–Cys-70.

It belongs to the long (4 C-C) scorpion toxin superfamily. Sodium channel inhibitor family. As to expression, expressed by the venom gland.

Its subcellular location is the secreted. In terms of biological role, probable sodium channel toxin. In Tityus serrulatus (Brazilian scorpion), this protein is Probable sodium channel toxin Ts27.